The sequence spans 243 residues: Uridylate kinase (243 aa).

An ATP-binding site is contributed by lysine 18–glycine 21. Glycine 59 contributes to the UMP binding site. Positions 60 and 64 each coordinate ATP. Residues aspartate 79 and methionine 140–threonine 147 contribute to the UMP site. Positions 173 and 176 each coordinate ATP.

The protein belongs to the UMP kinase family. In terms of assembly, homohexamer.

Its subcellular location is the cytoplasm. It catalyses the reaction UMP + ATP = UDP + ADP. Its pathway is pyrimidine metabolism; CTP biosynthesis via de novo pathway; UDP from UMP (UMPK route): step 1/1. Inhibited by UTP. Functionally, catalyzes the reversible phosphorylation of UMP to UDP. The sequence is that of Uridylate kinase from Corynebacterium diphtheriae (strain ATCC 700971 / NCTC 13129 / Biotype gravis).